A 390-amino-acid polypeptide reads, in one-letter code: Succinate--CoA ligase [ADP-forming] subunit beta (390 aa).

In terms of domain architecture, ATP-grasp spans 9–248 (KDILRKFGVT…TSEEDPFEVE (240 aa)). ATP is bound by residues K50, 57-59 (GRG), E103, M106, and E111. 2 residues coordinate Mg(2+): N203 and D217. Substrate is bound by residues N268 and 325–327 (GIV).

It belongs to the succinate/malate CoA ligase beta subunit family. Heterotetramer of two alpha and two beta subunits. The cofactor is Mg(2+).

It catalyses the reaction succinate + ATP + CoA = succinyl-CoA + ADP + phosphate. It carries out the reaction GTP + succinate + CoA = succinyl-CoA + GDP + phosphate. It participates in carbohydrate metabolism; tricarboxylic acid cycle; succinate from succinyl-CoA (ligase route): step 1/1. Functionally, succinyl-CoA synthetase functions in the citric acid cycle (TCA), coupling the hydrolysis of succinyl-CoA to the synthesis of either ATP or GTP and thus represents the only step of substrate-level phosphorylation in the TCA. The beta subunit provides nucleotide specificity of the enzyme and binds the substrate succinate, while the binding sites for coenzyme A and phosphate are found in the alpha subunit. The polypeptide is Succinate--CoA ligase [ADP-forming] subunit beta (Chlorobium chlorochromatii (strain CaD3)).